A 271-amino-acid polypeptide reads, in one-letter code: Formamidopyrimidine-DNA glycosylase (271 aa).

Pro2 serves as the catalytic Schiff-base intermediate with DNA. Glu3 (proton donor) is an active-site residue. Lys58 functions as the Proton donor; for beta-elimination activity in the catalytic mechanism. DNA-binding residues include His91, Arg110, and Arg152. The segment at 237–271 (RAYGRGGQPCTVCQTELKEIKLGQRTSVFCPSCQR) adopts an FPG-type zinc-finger fold. Arg261 functions as the Proton donor; for delta-elimination activity in the catalytic mechanism.

Belongs to the FPG family. In terms of assembly, monomer. Zn(2+) is required as a cofactor.

It catalyses the reaction Hydrolysis of DNA containing ring-opened 7-methylguanine residues, releasing 2,6-diamino-4-hydroxy-5-(N-methyl)formamidopyrimidine.. The catalysed reaction is 2'-deoxyribonucleotide-(2'-deoxyribose 5'-phosphate)-2'-deoxyribonucleotide-DNA = a 3'-end 2'-deoxyribonucleotide-(2,3-dehydro-2,3-deoxyribose 5'-phosphate)-DNA + a 5'-end 5'-phospho-2'-deoxyribonucleoside-DNA + H(+). Its function is as follows. Involved in base excision repair of DNA damaged by oxidation or by mutagenic agents. Acts as a DNA glycosylase that recognizes and removes damaged bases. Has a preference for oxidized purines, such as 7,8-dihydro-8-oxoguanine (8-oxoG). Has AP (apurinic/apyrimidinic) lyase activity and introduces nicks in the DNA strand. Cleaves the DNA backbone by beta-delta elimination to generate a single-strand break at the site of the removed base with both 3'- and 5'-phosphates. The polypeptide is Formamidopyrimidine-DNA glycosylase (Hahella chejuensis (strain KCTC 2396)).